Consider the following 93-residue polypeptide: UPF0298 protein lwe2074 (93 aa).

The protein belongs to the UPF0298 family.

The protein resides in the cytoplasm. In Listeria welshimeri serovar 6b (strain ATCC 35897 / DSM 20650 / CCUG 15529 / CIP 8149 / NCTC 11857 / SLCC 5334 / V8), this protein is UPF0298 protein lwe2074.